We begin with the raw amino-acid sequence, 122 residues long: Large ribosomal subunit protein bL12 (122 aa).

The protein belongs to the bacterial ribosomal protein bL12 family. As to quaternary structure, homodimer. Part of the ribosomal stalk of the 50S ribosomal subunit. Forms a multimeric L10(L12)X complex, where L10 forms an elongated spine to which 2 to 4 L12 dimers bind in a sequential fashion. Binds GTP-bound translation factors.

Forms part of the ribosomal stalk which helps the ribosome interact with GTP-bound translation factors. Is thus essential for accurate translation. This is Large ribosomal subunit protein bL12 from Bdellovibrio bacteriovorus (strain ATCC 15356 / DSM 50701 / NCIMB 9529 / HD100).